A 141-amino-acid polypeptide reads, in one-letter code: Hemoglobin subunit alpha-D (141 aa).

The Globin domain occupies 1–141 (MLNHDEKQLI…VSAVLAEKYR (141 aa)). Residues histidine 58 and histidine 87 each contribute to the heme b site.

This sequence belongs to the globin family. As to quaternary structure, heterotetramer of two alpha-D chains and two beta chains. As to expression, red blood cells.

In terms of biological role, involved in oxygen transport from the lung to the various peripheral tissues. The sequence is that of Hemoglobin subunit alpha-D (HBAD) from Chrysemys picta bellii (Western painted turtle).